Consider the following 410-residue polypeptide: Iron-sulfur cluster assembly SufBD family protein MTH_1150 (410 aa).

The protein belongs to the iron-sulfur cluster assembly SufBD family.

This Methanothermobacter thermautotrophicus (strain ATCC 29096 / DSM 1053 / JCM 10044 / NBRC 100330 / Delta H) (Methanobacterium thermoautotrophicum) protein is Iron-sulfur cluster assembly SufBD family protein MTH_1150.